The primary structure comprises 115 residues: NADH-ubiquinone oxidoreductase chain 3 (115 aa).

3 helical membrane passes run 3 to 23 (LLIIITINITLSFILISIAFW), 55 to 75 (FFLVAITFLLFDLEIALLLPL), and 86 to 106 (TMMATAFILVTILALGLSYEW).

It belongs to the complex I subunit 3 family. Core subunit of respiratory chain NADH dehydrogenase (Complex I) which is composed of 45 different subunits. Interacts with TMEM186. Interacts with TMEM242.

The protein resides in the mitochondrion inner membrane. It carries out the reaction a ubiquinone + NADH + 5 H(+)(in) = a ubiquinol + NAD(+) + 4 H(+)(out). Its function is as follows. Core subunit of the mitochondrial membrane respiratory chain NADH dehydrogenase (Complex I) which catalyzes electron transfer from NADH through the respiratory chain, using ubiquinone as an electron acceptor. Essential for the catalytic activity of complex I. This is NADH-ubiquinone oxidoreductase chain 3 from Rattus norvegicus (Rat).